We begin with the raw amino-acid sequence, 589 residues long: F-box only protein 24 (589 aa).

The F-box domain maps to 23-69; that stretch reads PISVQLFPPELVEHIVSFLPVKDLVALGQTCHYFHEVCDAEGVWRRI. Residues 386 to 435 form an RCC1 repeat; the sequence is GRIFMQGNNRYGQLGTGDKMDRGEPTQVHYLQRPIALWCGLNHSLVLSQT. The tract at residues 506 to 526 is disordered; the sequence is VGGSPEPSQGAGAPQDPGGTA.

Directly interacts with SKP1 and CUL1.

Functionally, substrate-recognition component of the SCF (SKP1-CUL1-F-box protein)-type E3 ubiquitin ligase complex. In Mus musculus (Mouse), this protein is F-box only protein 24 (Fbxo24).